Here is a 1161-residue protein sequence, read N- to C-terminus: MAASRTASTANTNNGASTAPLRISFAKIKEPLEVPNLLALQTESFDWLLGNDAWKARVEAALDSGQDVPTKSGLEEIFEEISPIEDFSGSMSLTFRDHRFEPPKNSIDECKDRDFTYAAPLFVTAEFTNNETGEIKSQTVFMGDFPLMTNKGTFVINGTERVVVSQLVRSPGVYFDSSIDKTSDKDIFSAKVIPSRGAWLEMEIDKRDMVGVRIDRKRKQSVTVLLKALGWTTEQILEEFGEYESMRATLEKDHTQGQDDALLDIYRKLRPGEPPTREAAQTLLENLYFNPKRYDLAKVGRYKVNKKLGGEAPLDAGILTVEDIISSIKYLVKLHAGETETVGDNGTSIVVETDDIDHFGNRRLRNVGELIQNQVRTGLARMERVVRERMTTQDVEAITPQTLINIRPVVASIKEFFGTSQLSQFMDQNNPLSGLTHKRRLSALGPGGLSRERAGFEVRDVHPSHYGRMCPIETPEGPNIGLIGSLASYGRVNAFGFVETPYRRVTDGVVTDEVDYLTADEEDRFVIAQANAPLGDDFRFEETRVLVRRRGGEVDYVPGDDVDYMDVSPRQMVSVATAMIPFLEHDDANRALMGANMMRQAVPLIKSEAPLVGTGMEYRCAVDAGDVLKSEKDGVVQEVSADYVTTANDDGTYTTYRLHKFSRSNQGTSVNQKVVVDEGARVIAGQVLADGPATENGEMALGKNLLVAFMPWEGHNYEDAIILSQRLVQDDVLSSIHIEEHEVDARDTKLGPEEITRDIPNVSEEVLADLDERGIIRIGAEVVAGDILVGKVTPKGETELTPEERLLRAIFGEKAREVRDTSLKVPHGEIGKVIGVRVFDREEGDELPPGVNQLVRVYVAQKRKITDGDKLAGRHGNKGVISKILPIEDMPFLEDGTPVDIILNPLGVPSRMNPGQVLEIHLGWLASRGWDVSGLADDWAQRLQAIEADQVAPGTNVATPVFDGAREDELAGLLQHTIPNRDGERMVLPTGKAPLFDGRSGEPFPEPISVGYMYILKLHHLVDDKLHARSTGPYSMITQQPLGGKAQFGGQRFGEMEVWALEAYGAAYALQELLTIKSDDVTGRVKVYEAIVKGENIPEPGIPESFKVLIKEMQSLCLNVEVLSSDGMSIEMRDTDEDVFRAAEELGIDLSRREPSSVEEV.

Belongs to the RNA polymerase beta chain family. In terms of assembly, the RNAP catalytic core consists of 2 alpha, 1 beta, 1 beta' and 1 omega subunit. When a sigma factor is associated with the core the holoenzyme is formed, which can initiate transcription.

The catalysed reaction is RNA(n) + a ribonucleoside 5'-triphosphate = RNA(n+1) + diphosphate. Functionally, DNA-dependent RNA polymerase catalyzes the transcription of DNA into RNA using the four ribonucleoside triphosphates as substrates. This chain is DNA-directed RNA polymerase subunit beta, found in Streptomyces avermitilis (strain ATCC 31267 / DSM 46492 / JCM 5070 / NBRC 14893 / NCIMB 12804 / NRRL 8165 / MA-4680).